The chain runs to 102 residues: Large ribosomal subunit protein uL24 (102 aa).

The protein belongs to the universal ribosomal protein uL24 family. Part of the 50S ribosomal subunit.

One of two assembly initiator proteins, it binds directly to the 5'-end of the 23S rRNA, where it nucleates assembly of the 50S subunit. Functionally, one of the proteins that surrounds the polypeptide exit tunnel on the outside of the subunit. This chain is Large ribosomal subunit protein uL24, found in Polynucleobacter asymbioticus (strain DSM 18221 / CIP 109841 / QLW-P1DMWA-1) (Polynucleobacter necessarius subsp. asymbioticus).